Here is a 204-residue protein sequence, read N- to C-terminus: UPF0215 protein MTH_1316 (204 aa).

This sequence belongs to the UPF0215 family.

In Methanothermobacter thermautotrophicus (strain ATCC 29096 / DSM 1053 / JCM 10044 / NBRC 100330 / Delta H) (Methanobacterium thermoautotrophicum), this protein is UPF0215 protein MTH_1316.